The following is a 430-amino-acid chain: Dihydrofolate synthase/folylpolyglutamate synthase (430 aa).

51–54 (GKGS) contacts ATP. Ser-75 contributes to the Mg(2+) binding site. 114–117 (TEYG) serves as a coordination point for 7,8-dihydropteroate. Glu-145 is a Mg(2+) binding site. 152–154 (FDS) serves as a coordination point for 7,8-dihydropteroate. His-172 contributes to the Mg(2+) binding site. The ATP site is built by Gln-263, Arg-302, and Asp-315.

The protein belongs to the folylpolyglutamate synthase family. Monomer. It depends on Mg(2+) as a cofactor.

It catalyses the reaction 7,8-dihydropteroate + L-glutamate + ATP = 7,8-dihydrofolate + ADP + phosphate + H(+). The enzyme catalyses (6S)-5,6,7,8-tetrahydrofolyl-(gamma-L-Glu)(n) + L-glutamate + ATP = (6S)-5,6,7,8-tetrahydrofolyl-(gamma-L-Glu)(n+1) + ADP + phosphate + H(+). Its pathway is cofactor biosynthesis; tetrahydrofolate biosynthesis; 7,8-dihydrofolate from 2-amino-4-hydroxy-6-hydroxymethyl-7,8-dihydropteridine diphosphate and 4-aminobenzoate: step 2/2. It participates in cofactor biosynthesis; tetrahydrofolylpolyglutamate biosynthesis. Its function is as follows. Functions in two distinct reactions of the de novo folate biosynthetic pathway. Catalyzes the addition of a glutamate residue to dihydropteroate (7,8-dihydropteroate or H2Pte) to form dihydrofolate (7,8-dihydrofolate monoglutamate or H2Pte-Glu). Also catalyzes successive additions of L-glutamate to tetrahydrofolate, leading to folylpolyglutamate derivatives. This is Dihydrofolate synthase/folylpolyglutamate synthase (folC) from Bacillus subtilis (strain 168).